The chain runs to 213 residues: Thiamine-phosphate synthase (213 aa).

Residues 41-45 (QFRVK) and asparagine 73 each bind 4-amino-2-methyl-5-(diphosphooxymethyl)pyrimidine. Aspartate 74 and aspartate 93 together coordinate Mg(2+). Threonine 112 contributes to the 4-amino-2-methyl-5-(diphosphooxymethyl)pyrimidine binding site. 139–141 (SAT) serves as a coordination point for 2-[(2R,5Z)-2-carboxy-4-methylthiazol-5(2H)-ylidene]ethyl phosphate. Lysine 142 contacts 4-amino-2-methyl-5-(diphosphooxymethyl)pyrimidine. 2-[(2R,5Z)-2-carboxy-4-methylthiazol-5(2H)-ylidene]ethyl phosphate is bound at residue glycine 171.

This sequence belongs to the thiamine-phosphate synthase family. Mg(2+) serves as cofactor.

The catalysed reaction is 2-[(2R,5Z)-2-carboxy-4-methylthiazol-5(2H)-ylidene]ethyl phosphate + 4-amino-2-methyl-5-(diphosphooxymethyl)pyrimidine + 2 H(+) = thiamine phosphate + CO2 + diphosphate. The enzyme catalyses 2-(2-carboxy-4-methylthiazol-5-yl)ethyl phosphate + 4-amino-2-methyl-5-(diphosphooxymethyl)pyrimidine + 2 H(+) = thiamine phosphate + CO2 + diphosphate. It carries out the reaction 4-methyl-5-(2-phosphooxyethyl)-thiazole + 4-amino-2-methyl-5-(diphosphooxymethyl)pyrimidine + H(+) = thiamine phosphate + diphosphate. Its pathway is cofactor biosynthesis; thiamine diphosphate biosynthesis; thiamine phosphate from 4-amino-2-methyl-5-diphosphomethylpyrimidine and 4-methyl-5-(2-phosphoethyl)-thiazole: step 1/1. Condenses 4-methyl-5-(beta-hydroxyethyl)thiazole monophosphate (THZ-P) and 2-methyl-4-amino-5-hydroxymethyl pyrimidine pyrophosphate (HMP-PP) to form thiamine monophosphate (TMP). The polypeptide is Thiamine-phosphate synthase (Erythrobacter litoralis (strain HTCC2594)).